The sequence spans 242 residues: MLTKFLPLLLLLLPGCALCNSDGSQSLHMLQISYFQDNHHVRHQGNASLGKLLTHTLEGPSQNVTILQLQPWQDPESWERTESGLQIYLTQFESLVKLVYRERKENVFFPLTVSCSLGCELPEEEEEGSEPHVFFDVAVNGSAFVSFRPKTAVWVSGSQEPSKAANFTLKQLNAYNRTRYELQEFLQDTCVEFLENHITTQNMKGSQTGRSYTSLVLGILMGCFIIAGVAVGIFMCTSGRRC.

An N-terminal signal peptide occupies residues 1-17 (MLTKFLPLLLLLLPGCA). Over 18–214 (LCNSDGSQSL…GSQTGRSYTS (197 aa)) the chain is Extracellular. 5 N-linked (GlcNAc...) asparagine glycosylation sites follow: asparagine 46, asparagine 63, asparagine 140, asparagine 166, and asparagine 176. 2 disulfides stabilise this stretch: cysteine 119–cysteine 190 and cysteine 223–cysteine 236. A helical membrane pass occupies residues 215–235 (LVLGILMGCFIIAGVAVGIFM). At 236–242 (CTSGRRC) the chain is on the cytoplasmic side.

As to expression, expressed in endothelial cells.

The protein resides in the membrane. Functionally, binds activated protein C. Enhances protein C activation by the thrombin-thrombomodulin complex; plays a role in the protein C pathway controlling blood coagulation. This chain is Endothelial protein C receptor (Procr), found in Mus musculus (Mouse).